The primary structure comprises 496 residues: O-acetyltransferase cpsE (496 aa).

Positions 203-217 (IGTQGQLPDGVQSSD) are enriched in polar residues. Residues 203–228 (IGTQGQLPDGVQSSDDPTDGAGDIFE) form a disordered region.

The protein belongs to the fumigaclavine B O-acetyltransferase family.

The enzyme catalyses campesine A + acetyl-CoA = campesine C + CoA. It functions in the pathway alkaloid biosynthesis. Functionally, O-acetyltransferase; part of the gene cluster that mediates the biosynthesis of campesine G, a dimeric indole piperazine alkaloid that shows good insecticidal activity Galleria mellonella. Within the pathway, cpsE acetylates N13 of campesine A to produce campesine C. CpsE produces an inseparable mixture of two acyl-atropisomers due to the spontaneous rotation of an acyl group at N13 of piperazine ring. The non-canonical non-ribosomal peptide synthetase cpsA catalyzes the first steps of the pathway by producing L-tryptophanal and L-valinal from their respective amino-acids. These products condensate spontaneously to form trypyl-valyl pyrazine also known as didehydrocampesine A. The NmrA-like family domain-containing oxidoreductase cpsB is the next enzyme in cps pathway and reduces the unstable didehydrocampesine A to campesine A. The methyltransferase cpsF and the acetyltransferase cpsE both recognize N13 of piperazine ring to carry out methylation and acetylation of campesine A to produce campesine C and B, respectively. The cytochrome P450 monooxygenase cpsD then acts as a dimerase that catalyzes oxidative heterocoupling between campesine B and C to produce heterodimers with unexpected 6/5/6/6/6/6/5/6 eight-ring scaffold called campesine D. Finally,the cytochrome P450 monooxygenase cpsC is a regioselective dehydrogenase that catalyzes dehydrogenation reaction towards C2-N1 to produce campesine G. This chain is O-acetyltransferase cpsE, found in Aspergillus campestris (strain IBT 28561).